A 176-amino-acid polypeptide reads, in one-letter code: Endoribonuclease YbeY (176 aa).

Zn(2+)-binding residues include His139, His143, and His149.

This sequence belongs to the endoribonuclease YbeY family. Zn(2+) serves as cofactor.

The protein resides in the cytoplasm. Functionally, single strand-specific metallo-endoribonuclease involved in late-stage 70S ribosome quality control and in maturation of the 3' terminus of the 16S rRNA. This is Endoribonuclease YbeY from Acaryochloris marina (strain MBIC 11017).